The following is an 89-amino-acid chain: Small ribosomal subunit protein uS15 (89 aa).

This sequence belongs to the universal ribosomal protein uS15 family. Part of the 30S ribosomal subunit. Forms a bridge to the 50S subunit in the 70S ribosome, contacting the 23S rRNA.

In terms of biological role, one of the primary rRNA binding proteins, it binds directly to 16S rRNA where it helps nucleate assembly of the platform of the 30S subunit by binding and bridging several RNA helices of the 16S rRNA. Functionally, forms an intersubunit bridge (bridge B4) with the 23S rRNA of the 50S subunit in the ribosome. In Streptococcus equi subsp. zooepidemicus (strain H70), this protein is Small ribosomal subunit protein uS15.